The chain runs to 328 residues: Stress response kinase A (328 aa).

Asp201 acts as the Proton acceptor in catalysis. 2 residues coordinate Mg(2+): Asn206 and Asp217. The active site involves Asp217.

Belongs to the SrkA/RdoA protein kinase family. In terms of assembly, monomer. Mg(2+) is required as a cofactor.

The protein resides in the cytoplasm. It carries out the reaction L-seryl-[protein] + ATP = O-phospho-L-seryl-[protein] + ADP + H(+). The catalysed reaction is L-threonyl-[protein] + ATP = O-phospho-L-threonyl-[protein] + ADP + H(+). A protein kinase that phosphorylates Ser and Thr residues. Probably acts to suppress the effects of stress linked to accumulation of reactive oxygen species. Probably involved in the extracytoplasmic stress response. This chain is Stress response kinase A, found in Salmonella paratyphi A (strain ATCC 9150 / SARB42).